A 142-amino-acid polypeptide reads, in one-letter code: Large ribosomal subunit protein uL13 (142 aa).

This sequence belongs to the universal ribosomal protein uL13 family. Part of the 50S ribosomal subunit.

Its function is as follows. This protein is one of the early assembly proteins of the 50S ribosomal subunit, although it is not seen to bind rRNA by itself. It is important during the early stages of 50S assembly. This is Large ribosomal subunit protein uL13 from Pasteurella multocida (strain Pm70).